The sequence spans 357 residues: UDP-N-acetylglucosamine--N-acetylmuramyl-(pentapeptide) pyrophosphoryl-undecaprenol N-acetylglucosamine transferase (357 aa).

Residues 15–17, N123, R164, S190, and Q284 contribute to the UDP-N-acetyl-alpha-D-glucosamine site; that span reads TGG.

It belongs to the glycosyltransferase 28 family. MurG subfamily.

It is found in the cell inner membrane. The catalysed reaction is di-trans,octa-cis-undecaprenyl diphospho-N-acetyl-alpha-D-muramoyl-L-alanyl-D-glutamyl-meso-2,6-diaminopimeloyl-D-alanyl-D-alanine + UDP-N-acetyl-alpha-D-glucosamine = di-trans,octa-cis-undecaprenyl diphospho-[N-acetyl-alpha-D-glucosaminyl-(1-&gt;4)]-N-acetyl-alpha-D-muramoyl-L-alanyl-D-glutamyl-meso-2,6-diaminopimeloyl-D-alanyl-D-alanine + UDP + H(+). Its pathway is cell wall biogenesis; peptidoglycan biosynthesis. Functionally, cell wall formation. Catalyzes the transfer of a GlcNAc subunit on undecaprenyl-pyrophosphoryl-MurNAc-pentapeptide (lipid intermediate I) to form undecaprenyl-pyrophosphoryl-MurNAc-(pentapeptide)GlcNAc (lipid intermediate II). This is UDP-N-acetylglucosamine--N-acetylmuramyl-(pentapeptide) pyrophosphoryl-undecaprenol N-acetylglucosamine transferase from Synechococcus elongatus (strain ATCC 33912 / PCC 7942 / FACHB-805) (Anacystis nidulans R2).